The chain runs to 54 residues: VTSYTLNEVVPLKDVVPEWVRIGFSATTGAEFAAHEVLSWSFHSELGGTSASKQ.

It belongs to the leguminous lectin family. In terms of assembly, tetramer of two alpha and two beta chains.

This is Lectin alpha-1 chain from Lathyrus hirsutus (Rough pea).